We begin with the raw amino-acid sequence, 184 residues long: ATP-dependent protease subunit HslV (184 aa).

Thr-12 is an active-site residue. Ala-166, Cys-169, and Thr-172 together coordinate Na(+).

This sequence belongs to the peptidase T1B family. HslV subfamily. As to quaternary structure, a double ring-shaped homohexamer of HslV is capped on each side by a ring-shaped HslU homohexamer. The assembly of the HslU/HslV complex is dependent on binding of ATP.

It localises to the cytoplasm. It carries out the reaction ATP-dependent cleavage of peptide bonds with broad specificity.. Allosterically activated by HslU binding. Its function is as follows. Protease subunit of a proteasome-like degradation complex believed to be a general protein degrading machinery. This chain is ATP-dependent protease subunit HslV, found in Nitrobacter hamburgensis (strain DSM 10229 / NCIMB 13809 / X14).